A 265-amino-acid polypeptide reads, in one-letter code: MIKWPWNNSQPQVQTLEHWQAAISIPLLAPLSDEEHQKLAALADQFLKQKRLIPLQELLLTDIMQRRIALLFSLPVLSLGIGALDGFHEVLVYPGPFIVEEEWQDDIGLVHTGKMVQSGQSWDQGPIVLNWQEVQDSFDLSGFNLIIHEVAHKLDIRSSGEATGVPLIPLRDIAVWEQHLHSAMDALQEEIDLVGEDAASMDPYAVHDPAECFAVLSEYFFSAPELLEERFPDLYRCFQKFYRQDPLARLKSWQNNINYRAPSIY.

Zn(2+) is bound by residues histidine 111, histidine 148, histidine 152, and glutamate 211.

Belongs to the MtfA family. Interacts with Mlc. The cofactor is Zn(2+).

It is found in the cytoplasm. Its function is as follows. Involved in the modulation of the activity of the glucose-phosphotransferase system (glucose-PTS). Interacts with the transcriptional repressor Mlc, preventing its interaction with DNA and leading to the modulation of expression of genes regulated by Mlc, including ptsG, which encodes the PTS system glucose-specific EIICB component. In terms of biological role, shows zinc-dependent metallopeptidase activity. The protein is Mlc titration factor A of Pectobacterium atrosepticum (strain SCRI 1043 / ATCC BAA-672) (Erwinia carotovora subsp. atroseptica).